The chain runs to 333 residues: Fe(3+)-citrate import system permease protein YfmE (333 aa).

Transmembrane regions (helical) follow at residues 12–32 (LLAI…SIGI), 65–85 (IILA…LQGV), 95–115 (VVGI…IFPE), 120–140 (VLPF…LMIA), 194–214 (EVKL…ILIP), 238–258 (FILI…VGSI), 279–299 (YLLP…DTLG), and 306–326 (VEIP…LYLL).

It belongs to the binding-protein-dependent transport system permease family. FecCD subfamily. The complex is composed of one ATP-binding protein (YfmF), two transmembrane proteins (YfmD and YfmE) and a solute-binding protein (YfmC).

It localises to the cell membrane. In terms of biological role, part of the ABC transporter complex YfmCDEF involved in citrate-dependent Fe(3+) import. Involved in the translocation of the substrate across the membrane. The polypeptide is Fe(3+)-citrate import system permease protein YfmE (yfmE) (Bacillus subtilis (strain 168)).